A 553-amino-acid chain; its full sequence is MSDSTGRINSKASDSSSISDHQTADLSIFNGSFDGGAFSSSNIPLFNFMGTGNQRFQYSPHPFAKSSDPCRLAALTPSTPKGPLNLTPADFGLADFSVGNESFADFTANNTSFVGNVQSNVRSTRLLPAWAVDNSGNIRDDLTLQDVVSNGSLIDFAMDRTGVKFLERHFPEDHDNEMHFVLFDKLTEQGAVFTSLCRSAAGNFIIQKFVEHATLDEQERLVRKMCDNGLIEMCLDKFACRVVQMSIQKFDVSIAMKLVEKISSLDFLPLCTDQCAIHVLQKVVKLLPISAWSFFVKFLCRDDNLMTVCQDKYGCRLVQQTIDKLSDNPKLHCFNTRLQLLHGLMTSVARNCFRLSSNEFANYVVQYVIKSSGVMEMYRDTIIEKCLLRNILSMSQDKYASHVVEGAFLFAPPLLLSEMMDEIFDGYVKDQETNRDALDILLFHQYGNYVVQQMISICISALLGKEERKMVASEMRLYAKWFDRIKNRVNRHSGRLERFSSGKKIIESLQKLNVPMTMTNEPMPYWAMPTPLMDISAHFMNKLNFQKNSVFDE.

Pumilio repeat units follow at residues 146–184 (DVVS…VLFD), 185–223 (KLTE…RLVR), 224–260 (KMCD…KLVE), 261–296 (KISS…SFFV), 297–335 (KFLC…HCFN), 347–384 (SVAR…TIIE), 386–421 (CLLR…EMMD), and 432–472 (ETNR…KMVA). The segment at 499-514 (FSSGKKIIESLQKLNV) is RNA-binding.

As to expression, detected in differentiating oocytes with highest levels observed in developing ooctyes in the distal portion of the proximal gonad.

It localises to the cytoplasm. It is found in the P-body. Functionally, RNA-binding protein that binds to the consensus sequence 5'-CUCUGUAUCUUGU-3' in mRNA 3'-UTRs and modulates mRNA expression and stability. Functions redundantly with puf-6 and puf-7 in oocyte formation and organization, early embryonic cell divisions, and repression of expression of glp-1 and other maternal mRNAs in late oogenesis. The chain is Pumilio domain-containing protein 5 from Caenorhabditis elegans.